We begin with the raw amino-acid sequence, 615 residues long: Zinc finger protein 653 (615 aa).

Disordered regions lie at residues 1–46, 93–115, and 174–235; these read MAER…ARRR, RSGR…KRRR, and PLSD…SGLI. A compositionally biased stretch (low complexity) spans 7-25; sequence EPGAEAEAGAGGEAAAEEG. Residues 106–115 are compositionally biased toward basic residues; it reads KKPKRKKRRR. 2 stretches are compositionally biased toward low complexity: residues 192–203 and 212–232; these read GSSDSSSSGSSS and QPAK…TGSS. 5 C2H2-type zinc fingers span residues 467-492, 498-522, 528-550, 556-578, and 586-609; these read FHCP…NLVH, KVCP…MIIH, FTCE…RRTH, LQCE…MKKH, and FTCD…LKSH.

The protein belongs to the krueppel C2H2-type zinc-finger protein family. Interacts with NR5A1. As to expression, highly expressed in testis and spleen. Moderately expressed in lung, adrenal gland, uterus, and ovary. Very low expression in pancreas, heart, skeletal muscle, adipose tissue, kidney, and liver.

The protein resides in the nucleus. Transcriptional repressor. May repress NR5A1, PPARG, NR1H3, NR4A2, ESR1 and NR3C1 transcriptional activity. The sequence is that of Zinc finger protein 653 (Znf653) from Mus musculus (Mouse).